We begin with the raw amino-acid sequence, 223 residues long: MKRN2 opposite strand protein (223 aa).

The protein is MKRN2 opposite strand protein (MKRN2OS) of Homo sapiens (Human).